We begin with the raw amino-acid sequence, 211 residues long: Large ribosomal subunit protein uL3 (211 aa).

The segment at 134–155 is disordered; sequence ATHGNSLSHRAPGSIGQNQTPG. Gln152 is modified (N5-methylglutamine).

Belongs to the universal ribosomal protein uL3 family. In terms of assembly, part of the 50S ribosomal subunit. Forms a cluster with proteins L14 and L19. Methylated by PrmB.

One of the primary rRNA binding proteins, it binds directly near the 3'-end of the 23S rRNA, where it nucleates assembly of the 50S subunit. In Methylococcus capsulatus (strain ATCC 33009 / NCIMB 11132 / Bath), this protein is Large ribosomal subunit protein uL3.